The primary structure comprises 126 residues: Small ribosomal subunit protein bS6 (126 aa).

It belongs to the bacterial ribosomal protein bS6 family.

Binds together with bS18 to 16S ribosomal RNA. This chain is Small ribosomal subunit protein bS6, found in Bordetella bronchiseptica (strain ATCC BAA-588 / NCTC 13252 / RB50) (Alcaligenes bronchisepticus).